The chain runs to 562 residues: Probable sesquiterpene synthase (562 aa).

3 residues coordinate Mg(2+): Asp-315, Asp-319, and Glu-467. A DDXXD motif motif is present at residues 315-319 (DDIYD).

This sequence belongs to the terpene synthase family. Tpsa subfamily. Mg(2+) serves as cofactor. Mn(2+) is required as a cofactor.

Functionally, sesquiterpene synthase. The protein is Probable sesquiterpene synthase (SesquiTPS) of Santalum spicatum (Australian sandalwood).